The sequence spans 374 residues: Transcription factor NF-E2 45 kDa subunit (374 aa).

2 disordered regions span residues 1-21 and 40-61; these read MSPC…IPEP and LNAP…GPPP. The segment at 1-83 is required for interaction with MAPK8; it reads MSPCPPQQSR…PGFPLPAPPY (83 aa). A transactivation domain region spans residues 1-207; sequence MSPCPPQQSR…PPAETPLALE (207 aa). Positions 48–61 are enriched in pro residues; it reads FEPPAPVPYPGPPP. 2 consecutive short sequence motifs (PXY motif) follow at residues 61–65 and 79–83; these read PPPSY and PAPPY. The interval 132–165 is disordered; it reads LSAGPSKPQEDPESDSGLSLNYSDAESLELEGTE. Serine 158 is subject to Phosphoserine; by MAPK8. Serine 171 is modified (phosphoserine; by PKA). The segment at 207–227 is disordered; the sequence is EPSSGPVRAKPTARGEAGSRD. Residues 267–330 enclose the bZIP domain; the sequence is LVRDIRRRGK…EVMRQQLTDL (64 aa). The basic motif stretch occupies residues 269 to 288; the sequence is RDIRRRGKNKVAAQNCRKRK. The segment at 292-299 is leucine-zipper; it reads IVQLEREL. Lysine 369 is covalently cross-linked (Glycyl lysine isopeptide (Lys-Gly) (interchain with G-Cter in SUMO); alternate). A Glycyl lysine isopeptide (Lys-Gly) (interchain with G-Cter in SUMO1); alternate cross-link involves residue lysine 369.

Belongs to the bZIP family. CNC subfamily. As to quaternary structure, homodimer; can bind DNA as a homodimer. Erythroid transcription activator nuclear factor erythroid-derived 2 (NF-E2), composed of a heterodimer of NFE2 and MAFK, possesses transactivation activity on beta-globin. Also forms high affinity heterodimer with MAFG; the interaction promotes erythropoiesis. Interacts (via the PXY motif 1) with ITCH (via the WW 1 domain); the interaction promotes 'Lys63'-linked ubiquitination of NFE2, translocates it to the cytoplasm and inhibits its transactivation activity. Interacts with KMT2D/MLL2; the interaction promotes transactivation of the beta-globin locus. Interacts with MAPK8 (phosphorylated form); the interaction leads to phosphorylation of NFE2 in undifferentiated cells. Phosphorylated on serine residues. In undifferentiated erythrocytes, phosphorylated by MAPK8 which then leads to ubiquitination and protein degradation. In terms of processing, sumoylated. Sumoylation is required for translocation to nuclear bodies PODs, anchoring to the gene loci, and transactivation of the beta-globin gene. Post-translationally, ubiquitinated mainly by 'Lys63'-linked ubiquitin. Polyubiquitination with 'Lys63'-linked ubiquitin by ITCH retains NFE2 in the cytoplasm preventing its transactivation activity. In undifferentiated erythrocyte, is ubiquitinated after MAPK8-mediatd phosphorylation leading to protein degradation.

It is found in the nucleus. Its subcellular location is the cytoplasm. In terms of biological role, component of the NF-E2 complex essential for regulating erythroid and megakaryocytic maturation and differentiation. Binds to the hypersensitive site 2 (HS2) of the beta-globin control region (LCR). This subunit (NFE2) recognizes the TCAT/C sequence of the AP-1-like core palindrome present in a number of erythroid and megakaryocytic gene promoters. Requires MAFK or other small MAF proteins for binding to the NF-E2 motif. May play a role in all aspects of hemoglobin production from globin and heme synthesis to procurement of iron. The polypeptide is Transcription factor NF-E2 45 kDa subunit (NFE2) (Bos taurus (Bovine)).